We begin with the raw amino-acid sequence, 225 residues long: GTP cyclohydrolase III (225 aa).

This sequence belongs to the archaeal-type GTP cyclohydrolase family.

It catalyses the reaction GTP + 3 H2O = 2-amino-5-formylamino-6-(5-phospho-D-ribosylamino)pyrimidin-4(3H)-one + 2 phosphate + 2 H(+). In terms of biological role, catalyzes the formation of 2-amino-5-formylamino-6-ribofuranosylamino-4(3H)-pyrimidinone ribonucleotide monophosphate and inorganic phosphate from GTP. Also has an independent pyrophosphate phosphohydrolase activity. The polypeptide is GTP cyclohydrolase III (Sulfurisphaera tokodaii (strain DSM 16993 / JCM 10545 / NBRC 100140 / 7) (Sulfolobus tokodaii)).